The sequence spans 235 residues: Eukaryotic translation initiation factor 4E-1 (235 aa).

Residues 1–36 are disordered; it reads MVVEETIKATSTEDLSNTIANQNPRGRGGDEDEELE. Positions 8–24 are enriched in polar residues; sequence KATSTEDLSNTIANQNP. 2 EIF4G-binding regions span residues 60 to 63 and 70 to 106; these read HPLE and FDNP…NNIH. MRNA-binding positions include 78 to 83, Lys-110, and 128 to 129; these read KQATWG and WE. An intrachain disulfide couples Cys-133 to Cys-171. An EIF4G-binding region spans residues 154 to 163; that stretch reads YTLLAMIGEQ. MRNA-binding positions include 178–183 and 223–227; these read RSGQDK and KKFDR.

It belongs to the eukaryotic initiation factor 4E family. As to quaternary structure, EIF4F is a multi-subunit complex, the composition of which varies with external and internal environmental conditions. It is composed of at least EIF4A, EIF4E and EIF4G. EIF4E is also known to interact with other partners. In higher plants two isoforms of EIF4F have been identified, named isoform EIF4F and isoform EIF(iso)4F. Isoform EIF4F has subunits p220 and p26, whereas isoform EIF(iso)4F has subunits p82 and p28. (Microbial infection) Interacts with potyvirus viral genome-linked protein (VPg); this interaction is possible in susceptible hosts but impaired in resistant plants. Post-translationally, according to the redox status, the Cys-133-Cys-171 disulfide bridge may have a role in regulating protein function by affecting its ability to bind capped mRNA.

Its subcellular location is the nucleus. It is found in the cytoplasm. In terms of biological role, component of the protein complex eIF4F, which is involved in the recognition of the mRNA cap, ATP-dependent unwinding of 5'-terminal secondary structure and recruitment of mRNA to the ribosome. Recognizes and binds the 7-methylguanosine-containing mRNA cap during an early step in the initiation of protein synthesis and facilitates ribosome binding by inducing the unwinding of the mRNAs secondary structures. Key component of recessive resistance to potyviruses. (Microbial infection) Susceptibility host factor required for viral infection by recruiting viral RNAs to the host ribosomal complex via an interaction with viral genome-linked protein (VPg). This chain is Eukaryotic translation initiation factor 4E-1, found in Citrullus lanatus (Watermelon).